Reading from the N-terminus, the 488-residue chain is 3-octaprenyl-4-hydroxybenzoate carboxy-lyase (488 aa).

Asparagine 172 contributes to the Mn(2+) binding site. Prenylated FMN is bound by residues 175–177 (IYR), 189–191 (RWL), and 194–195 (RG). Glutamate 238 contacts Mn(2+). The active-site Proton donor is aspartate 287.

It belongs to the UbiD family. Homohexamer. Requires prenylated FMN as cofactor. Mn(2+) serves as cofactor.

It localises to the cell membrane. The catalysed reaction is a 4-hydroxy-3-(all-trans-polyprenyl)benzoate + H(+) = a 2-(all-trans-polyprenyl)phenol + CO2. It functions in the pathway cofactor biosynthesis; ubiquinone biosynthesis. Functionally, catalyzes the decarboxylation of 3-octaprenyl-4-hydroxy benzoate to 2-octaprenylphenol, an intermediate step in ubiquinone biosynthesis. This chain is 3-octaprenyl-4-hydroxybenzoate carboxy-lyase, found in Pseudomonas fluorescens (strain Pf0-1).